A 286-amino-acid polypeptide reads, in one-letter code: Putative S-adenosyl-L-methionine-dependent methyltransferase FRAAL3718 (286 aa).

S-adenosyl-L-methionine contacts are provided by residues Asp122 and 151 to 152 (DL).

Belongs to the UPF0677 family.

In terms of biological role, exhibits S-adenosyl-L-methionine-dependent methyltransferase activity. The sequence is that of Putative S-adenosyl-L-methionine-dependent methyltransferase FRAAL3718 from Frankia alni (strain DSM 45986 / CECT 9034 / ACN14a).